A 156-amino-acid chain; its full sequence is Small ribosomal subunit protein uS7 (156 aa).

The protein belongs to the universal ribosomal protein uS7 family. As to quaternary structure, part of the 30S ribosomal subunit. Contacts proteins S9 and S11.

Functionally, one of the primary rRNA binding proteins, it binds directly to 16S rRNA where it nucleates assembly of the head domain of the 30S subunit. Is located at the subunit interface close to the decoding center, probably blocks exit of the E-site tRNA. This is Small ribosomal subunit protein uS7 from Moorella thermoacetica (strain ATCC 39073 / JCM 9320).